Consider the following 248-residue polypeptide: Ubiquinone biosynthesis O-methyltransferase (248 aa).

S-adenosyl-L-methionine-binding residues include Arg41, Gly72, Asp93, and Met136.

It belongs to the methyltransferase superfamily. UbiG/COQ3 family.

It catalyses the reaction a 3-demethylubiquinol + S-adenosyl-L-methionine = a ubiquinol + S-adenosyl-L-homocysteine + H(+). It carries out the reaction a 3-(all-trans-polyprenyl)benzene-1,2-diol + S-adenosyl-L-methionine = a 2-methoxy-6-(all-trans-polyprenyl)phenol + S-adenosyl-L-homocysteine + H(+). Its pathway is cofactor biosynthesis; ubiquinone biosynthesis. Functionally, O-methyltransferase that catalyzes the 2 O-methylation steps in the ubiquinone biosynthetic pathway. This chain is Ubiquinone biosynthesis O-methyltransferase, found in Rhizobium etli (strain ATCC 51251 / DSM 11541 / JCM 21823 / NBRC 15573 / CFN 42).